The chain runs to 147 residues: Myosin-ID light chain (147 aa).

EF-hand domains are found at residues 8-43 (EAQS…LGQN), 79-114 (FDEK…LGER), and 115-147 (LPEE…MLKK). The Ca(2+) site is built by D21, N23, D25, K27, and E32.

In terms of assembly, myosin I is a dimer of a heavy and a light chain. Inability to self-assemble into filaments. Interacts with myoD. Does not interact with myoB or myoC.

The protein localises to the cytoplasm. Its function is as follows. Functions as the light chain for myosin-D. Has low affinity for calcium. This is Myosin-ID light chain (mlcD) from Dictyostelium discoideum (Social amoeba).